Reading from the N-terminus, the 170-residue chain is RNA pyrophosphohydrolase (170 aa).

The region spanning 8 to 151 (PYRPNVGIAL…KKALYAELIP (144 aa)) is the Nudix hydrolase domain. The Nudix box motif lies at 42–63 (GGIDEGETPQVAALREMGEEIG).

Belongs to the Nudix hydrolase family. RppH subfamily. A divalent metal cation is required as a cofactor.

Its function is as follows. Accelerates the degradation of transcripts by removing pyrophosphate from the 5'-end of triphosphorylated RNA, leading to a more labile monophosphorylated state that can stimulate subsequent ribonuclease cleavage. The protein is RNA pyrophosphohydrolase of Gluconobacter oxydans (strain 621H) (Gluconobacter suboxydans).